A 565-amino-acid chain; its full sequence is Mannosyl-oligosaccharide 1,2-alpha-mannosidase (565 aa).

A disulfide bridge connects residues C320 and C363. Catalysis depends on E378, which acts as the Proton donor. A Ca(2+)-binding site is contributed by T501. 2 stretches are compositionally biased toward basic and acidic residues: residues 526-538 and 550-565; these read NEKA…KVID and KSAD…EIAG. The segment at 526-565 is disordered; it reads NEKAQMRESKVIDKSNLPEAQPVDKSADQEAKEIIEEIAG.

Belongs to the glycosyl hydrolase 47 family. Ca(2+) serves as cofactor.

The catalysed reaction is N(4)-(alpha-D-Man-(1-&gt;2)-alpha-D-Man-(1-&gt;2)-alpha-D-Man-(1-&gt;3)-[alpha-D-Man-(1-&gt;2)-alpha-D-Man-(1-&gt;3)-[alpha-D-Man-(1-&gt;2)-alpha-D-Man-(1-&gt;6)]-alpha-D-Man-(1-&gt;6)]-beta-D-Man-(1-&gt;4)-beta-D-GlcNAc-(1-&gt;4)-beta-D-GlcNAc)-L-asparaginyl-[protein] (N-glucan mannose isomer 9A1,2,3B1,2,3) + 4 H2O = N(4)-(alpha-D-Man-(1-&gt;3)-[alpha-D-Man-(1-&gt;3)-[alpha-D-Man-(1-&gt;6)]-alpha-D-Man-(1-&gt;6)]-beta-D-Man-(1-&gt;4)-beta-D-GlcNAc-(1-&gt;4)-beta-D-GlcNAc)-L-asparaginyl-[protein] (N-glucan mannose isomer 5A1,2) + 4 beta-D-mannose. The enzyme catalyses N(4)-(alpha-D-Man-(1-&gt;2)-alpha-D-Man-(1-&gt;2)-alpha-D-Man-(1-&gt;3)-[alpha-D-Man-(1-&gt;3)-[alpha-D-Man-(1-&gt;2)-alpha-D-Man-(1-&gt;6)]-alpha-D-Man-(1-&gt;6)]-beta-D-Man-(1-&gt;4)-beta-D-GlcNAc-(1-&gt;4)-beta-D-GlcNAc)-L-asparaginyl-[protein] (N-glucan mannose isomer 8A1,2,3B1,3) + 3 H2O = N(4)-(alpha-D-Man-(1-&gt;3)-[alpha-D-Man-(1-&gt;3)-[alpha-D-Man-(1-&gt;6)]-alpha-D-Man-(1-&gt;6)]-beta-D-Man-(1-&gt;4)-beta-D-GlcNAc-(1-&gt;4)-beta-D-GlcNAc)-L-asparaginyl-[protein] (N-glucan mannose isomer 5A1,2) + 3 beta-D-mannose. The protein operates within protein modification; protein glycosylation. Functionally, involved in the maturation of Asn-linked oligosaccharides. Trim a single alpha-1,2-linked mannose residue from Man(9)GlcNAc(2) to produce Man(8)GlcNAc(2). The sequence is that of Mannosyl-oligosaccharide 1,2-alpha-mannosidase (MNS1) from Candida albicans (Yeast).